The chain runs to 101 residues: Small ribosomal subunit protein uS14 (101 aa).

Belongs to the universal ribosomal protein uS14 family. As to quaternary structure, part of the 30S ribosomal subunit. Contacts proteins S3 and S10.

Its function is as follows. Binds 16S rRNA, required for the assembly of 30S particles and may also be responsible for determining the conformation of the 16S rRNA at the A site. This chain is Small ribosomal subunit protein uS14, found in Alkalilimnicola ehrlichii (strain ATCC BAA-1101 / DSM 17681 / MLHE-1).